The sequence spans 95 residues: MSISSRVKSKRIQLGLNQAELAQKVGTTQQSIEQLENGKTKRPRFLPELASALGVSVDWLLNGTSDSNVRFVGHVEPKGKYPLISMVRAGSWCEA.

One can recognise an HTH cro/C1-type domain in the interval 7–60 (VKSKRIQLGLNQAELAQKVGTTQQSIEQLENGKTKRPRFLPELASALGVSVDWL). Positions 18–37 (QAELAQKVGTTQQSIEQLEN) form a DNA-binding region, H-T-H motif.

In terms of assembly, homodimer, when bound to an operator.

Functionally, binds to two sets of three contiguous operator sites in the phage genome. This chain is Repressor protein CI (CI), found in Escherichia coli (Bacteriophage 434).